The primary structure comprises 155 residues: Ribosomal RNA large subunit methyltransferase H (155 aa).

S-adenosyl-L-methionine contacts are provided by residues Leu-72, Gly-103, and 122–127 (LSDLTL).

Belongs to the RNA methyltransferase RlmH family. As to quaternary structure, homodimer.

The protein localises to the cytoplasm. It carries out the reaction pseudouridine(1915) in 23S rRNA + S-adenosyl-L-methionine = N(3)-methylpseudouridine(1915) in 23S rRNA + S-adenosyl-L-homocysteine + H(+). Functionally, specifically methylates the pseudouridine at position 1915 (m3Psi1915) in 23S rRNA. This is Ribosomal RNA large subunit methyltransferase H from Polaromonas naphthalenivorans (strain CJ2).